A 1119-amino-acid polypeptide reads, in one-letter code: G8 domain-containing protein DDB_G0288475 (1119 aa).

The first 22 residues, Met1–Ala22, serve as a signal peptide directing secretion. A G8 domain is found at Thr276–Ala404. N-linked (GlcNAc...) asparagine glycosylation is found at Asn308, Asn559, Asn736, Asn854, Asn968, Asn1035, Asn1056, and Asn1070.

The protein belongs to the comF family.

Its subcellular location is the secreted. This chain is G8 domain-containing protein DDB_G0288475, found in Dictyostelium discoideum (Social amoeba).